The chain runs to 385 residues: UPF0744 protein YSD83 (385 aa).

It belongs to the UPF0744 family.

This is UPF0744 protein YSD83 (YSD83) from Saccharomyces paradoxus (Yeast).